The sequence spans 932 residues: Isoleucine--tRNA ligase (932 aa).

The 'HIGH' region signature appears at 57–67; sequence PYANGDIHMGH. E556 is a binding site for L-isoleucyl-5'-AMP. A 'KMSKS' region motif is present at residues 597–601; that stretch reads KMSKS. Residue K600 coordinates ATP. Residues C891, C894, C911, and C914 each contribute to the Zn(2+) site.

It belongs to the class-I aminoacyl-tRNA synthetase family. IleS type 1 subfamily. Monomer. The cofactor is Zn(2+).

The protein resides in the cytoplasm. It catalyses the reaction tRNA(Ile) + L-isoleucine + ATP = L-isoleucyl-tRNA(Ile) + AMP + diphosphate. Functionally, catalyzes the attachment of isoleucine to tRNA(Ile). As IleRS can inadvertently accommodate and process structurally similar amino acids such as valine, to avoid such errors it has two additional distinct tRNA(Ile)-dependent editing activities. One activity is designated as 'pretransfer' editing and involves the hydrolysis of activated Val-AMP. The other activity is designated 'posttransfer' editing and involves deacylation of mischarged Val-tRNA(Ile). The polypeptide is Isoleucine--tRNA ligase (Lactiplantibacillus plantarum (strain ATCC BAA-793 / NCIMB 8826 / WCFS1) (Lactobacillus plantarum)).